The primary structure comprises 340 residues: Glycerol-3-phosphate dehydrogenase [NAD(P)+] (340 aa).

NADPH-binding residues include Ser13, Tyr14, and Lys108. Positions 108, 137, and 139 each coordinate sn-glycerol 3-phosphate. Ala141 serves as a coordination point for NADPH. Sn-glycerol 3-phosphate-binding residues include Lys193, Asp246, Ser256, Arg257, and Asn258. The Proton acceptor role is filled by Lys193. Position 257 (Arg257) interacts with NADPH. NADPH is bound by residues Ile281 and Glu283.

The protein belongs to the NAD-dependent glycerol-3-phosphate dehydrogenase family.

It is found in the cytoplasm. It catalyses the reaction sn-glycerol 3-phosphate + NAD(+) = dihydroxyacetone phosphate + NADH + H(+). The catalysed reaction is sn-glycerol 3-phosphate + NADP(+) = dihydroxyacetone phosphate + NADPH + H(+). Its pathway is membrane lipid metabolism; glycerophospholipid metabolism. In terms of biological role, catalyzes the reduction of the glycolytic intermediate dihydroxyacetone phosphate (DHAP) to sn-glycerol 3-phosphate (G3P), the key precursor for phospholipid synthesis. In Bartonella henselae (strain ATCC 49882 / DSM 28221 / CCUG 30454 / Houston 1) (Rochalimaea henselae), this protein is Glycerol-3-phosphate dehydrogenase [NAD(P)+].